Here is a 228-residue protein sequence, read N- to C-terminus: L-ribulose-5-phosphate 4-epimerase UlaF (228 aa).

Substrate-binding positions include 26–27 (GN), 43–44 (SG), and 72–73 (SS). Zn(2+)-binding residues include aspartate 74, histidine 93, and histidine 95. Aspartate 118 functions as the Proton donor/acceptor in the catalytic mechanism. Histidine 167 is a Zn(2+) binding site. Tyrosine 225 acts as the Proton donor/acceptor in catalysis.

It belongs to the aldolase class II family. AraD/FucA subfamily. The cofactor is Zn(2+).

The catalysed reaction is L-ribulose 5-phosphate = D-xylulose 5-phosphate. The protein operates within cofactor degradation; L-ascorbate degradation; D-xylulose 5-phosphate from L-ascorbate: step 4/4. Catalyzes the isomerization of L-ribulose 5-phosphate to D-xylulose 5-phosphate. Is involved in the anaerobic L-ascorbate utilization. This Escherichia coli O45:K1 (strain S88 / ExPEC) protein is L-ribulose-5-phosphate 4-epimerase UlaF.